The chain runs to 251 residues: uncharacterized protein (251 aa).

The HTH deoR-type domain occupies Thr-3–Lys-58. A DNA-binding region (H-T-H motif) is located at residues Val-20 to Asp-39.

This is an uncharacterized protein from Bacillus subtilis (strain 168).